A 188-amino-acid polypeptide reads, in one-letter code: Pyridoxal 5'-phosphate synthase subunit PdxT (188 aa).

46–48 (GES) serves as a coordination point for L-glutamine. Cys-78 (nucleophile) is an active-site residue. L-glutamine contacts are provided by residues Arg-105 and 134–135 (IR). Catalysis depends on charge relay system residues His-170 and Glu-172.

This sequence belongs to the glutaminase PdxT/SNO family. In the presence of PdxS, forms a dodecamer of heterodimers. Only shows activity in the heterodimer.

The catalysed reaction is aldehydo-D-ribose 5-phosphate + D-glyceraldehyde 3-phosphate + L-glutamine = pyridoxal 5'-phosphate + L-glutamate + phosphate + 3 H2O + H(+). It carries out the reaction L-glutamine + H2O = L-glutamate + NH4(+). It participates in cofactor biosynthesis; pyridoxal 5'-phosphate biosynthesis. Functionally, catalyzes the hydrolysis of glutamine to glutamate and ammonia as part of the biosynthesis of pyridoxal 5'-phosphate. The resulting ammonia molecule is channeled to the active site of PdxS. The protein is Pyridoxal 5'-phosphate synthase subunit PdxT of Thermotoga maritima (strain ATCC 43589 / DSM 3109 / JCM 10099 / NBRC 100826 / MSB8).